Consider the following 108-residue polypeptide: Protein ORFa in retron Ec67 (108 aa).

The sequence is that of Protein ORFa in retron Ec67 from Escherichia coli.